Here is a 156-residue protein sequence, read N- to C-terminus: MPRRRVVAKREALPDPKFGDVTLAKFMNHVMISGKKSVAERIVYGALDVVKTKLNRDPLEVFSEALENIAPLVEVKSRRVGGATYQVPVEVRASRRSALAMRWLVDYSRKRSEKSMPQRLAGELIDASQGKGAAVKKREDVHRMAEANKAFSHFRF.

This sequence belongs to the universal ribosomal protein uS7 family. In terms of assembly, part of the 30S ribosomal subunit. Contacts proteins S9 and S11.

In terms of biological role, one of the primary rRNA binding proteins, it binds directly to 16S rRNA where it nucleates assembly of the head domain of the 30S subunit. Is located at the subunit interface close to the decoding center, probably blocks exit of the E-site tRNA. The sequence is that of Small ribosomal subunit protein uS7 from Cellvibrio japonicus (strain Ueda107) (Pseudomonas fluorescens subsp. cellulosa).